Here is a 157-residue protein sequence, read N- to C-terminus: Beta-defensin 125 (157 aa).

A signal peptide spans 1–20 (MNILMLTFIICGLLTQVTKG). Disulfide bonds link C27-C55, C35-C49, and C39-C56. Positions 109-157 (GETMTPETNTPETTVPPSETTTPETTMPPSETATSETMPPPSQTALTHN) are disordered. Positions 110–145 (ETMTPETNTPETTVPPSETTTPETTMPPSETATSET) are enriched in low complexity.

Belongs to the beta-defensin family.

It is found in the secreted. Its function is as follows. Has antibacterial activity. This is Beta-defensin 125 (DEFB125) from Gorilla gorilla gorilla (Western lowland gorilla).